The sequence spans 309 residues: Beta-ketoacyl-[acyl-carrier-protein] synthase III (309 aa).

Catalysis depends on residues Cys111 and His236. Residues 237–241 (QANVR) form an ACP-binding region. Residue Asn266 is part of the active site.

It belongs to the thiolase-like superfamily. FabH family. Homodimer.

It is found in the cytoplasm. It catalyses the reaction malonyl-[ACP] + acetyl-CoA + H(+) = 3-oxobutanoyl-[ACP] + CO2 + CoA. Its pathway is lipid metabolism; fatty acid biosynthesis. Functionally, catalyzes the condensation reaction of fatty acid synthesis by the addition to an acyl acceptor of two carbons from malonyl-ACP. Catalyzes the first condensation reaction which initiates fatty acid synthesis and may therefore play a role in governing the total rate of fatty acid production. Possesses both acetoacetyl-ACP synthase and acetyl transacylase activities. Its substrate specificity determines the biosynthesis of branched-chain and/or straight-chain of fatty acids. The chain is Beta-ketoacyl-[acyl-carrier-protein] synthase III from Aquifex aeolicus (strain VF5).